We begin with the raw amino-acid sequence, 476 residues long: Bifunctional protein HldE (476 aa).

A ribokinase region spans residues 1–319 (MKVSLPAFEK…EALALHHGES (319 aa)). 195–198 (NMSE) contacts ATP. The active site involves D264. Residues 345–476 (MTNGCFDILH…AIIQNIMANQ (132 aa)) are cytidylyltransferase.

It in the N-terminal section; belongs to the carbohydrate kinase PfkB family. This sequence in the C-terminal section; belongs to the cytidylyltransferase family. In terms of assembly, homodimer.

The enzyme catalyses D-glycero-beta-D-manno-heptose 7-phosphate + ATP = D-glycero-beta-D-manno-heptose 1,7-bisphosphate + ADP + H(+). The catalysed reaction is D-glycero-beta-D-manno-heptose 1-phosphate + ATP + H(+) = ADP-D-glycero-beta-D-manno-heptose + diphosphate. Its pathway is nucleotide-sugar biosynthesis; ADP-L-glycero-beta-D-manno-heptose biosynthesis; ADP-L-glycero-beta-D-manno-heptose from D-glycero-beta-D-manno-heptose 7-phosphate: step 1/4. It functions in the pathway nucleotide-sugar biosynthesis; ADP-L-glycero-beta-D-manno-heptose biosynthesis; ADP-L-glycero-beta-D-manno-heptose from D-glycero-beta-D-manno-heptose 7-phosphate: step 3/4. Functionally, catalyzes the phosphorylation of D-glycero-D-manno-heptose 7-phosphate at the C-1 position to selectively form D-glycero-beta-D-manno-heptose-1,7-bisphosphate. Catalyzes the ADP transfer from ATP to D-glycero-beta-D-manno-heptose 1-phosphate, yielding ADP-D-glycero-beta-D-manno-heptose. In Shewanella putrefaciens (strain CN-32 / ATCC BAA-453), this protein is Bifunctional protein HldE.